The sequence spans 148 residues: Lysozyme-like protein 2 (148 aa).

A signal peptide spans 1–19 (MKAAGILTLIGCLVTGAES). Residues 20–148 (KIYTRCKLAK…SDWKKDCEVS (129 aa)) form the C-type lysozyme domain. 4 cysteine pairs are disulfide-bonded: Cys-25–Cys-145, Cys-49–Cys-133, Cys-83–Cys-98, and Cys-94–Cys-112. Glu-54 is a catalytic residue. Asn-58 is a glycosylation site (N-linked (GlcNAc...) asparagine). Asp-71 is a catalytic residue.

The protein belongs to the glycosyl hydrolase 22 family. Monomer. In terms of tissue distribution, expressed in testis, epididymis and placenta.

It is found in the secreted. It carries out the reaction Hydrolysis of (1-&gt;4)-beta-linkages between N-acetylmuramic acid and N-acetyl-D-glucosamine residues in a peptidoglycan and between N-acetyl-D-glucosamine residues in chitodextrins.. In Homo sapiens (Human), this protein is Lysozyme-like protein 2 (LYZL2).